The following is a 431-amino-acid chain: Serine hydroxymethyltransferase 2 (431 aa).

(6S)-5,6,7,8-tetrahydrofolate contacts are provided by residues L131 and 135–137; that span reads GHL. K240 is subject to N6-(pyridoxal phosphate)lysine. Position 256 (E256) interacts with (6S)-5,6,7,8-tetrahydrofolate.

The protein belongs to the SHMT family. Homodimer. The cofactor is pyridoxal 5'-phosphate.

The protein localises to the cytoplasm. The catalysed reaction is (6R)-5,10-methylene-5,6,7,8-tetrahydrofolate + glycine + H2O = (6S)-5,6,7,8-tetrahydrofolate + L-serine. The protein operates within one-carbon metabolism; tetrahydrofolate interconversion. It participates in amino-acid biosynthesis; glycine biosynthesis; glycine from L-serine: step 1/1. Catalyzes the reversible interconversion of serine and glycine with tetrahydrofolate (THF) serving as the one-carbon carrier. This reaction serves as the major source of one-carbon groups required for the biosynthesis of purines, thymidylate, methionine, and other important biomolecules. Also exhibits THF-independent aldolase activity toward beta-hydroxyamino acids, producing glycine and aldehydes, via a retro-aldol mechanism. This is Serine hydroxymethyltransferase 2 from Vibrio vulnificus (strain YJ016).